Reading from the N-terminus, the 360-residue chain is Peptide chain release factor 1 (360 aa).

Glutamine 235 carries the N5-methylglutamine modification. The segment at 284–313 is disordered; it reads AKRQQAEASTRRNLLGSGDRSDRNRTYNFP.

It belongs to the prokaryotic/mitochondrial release factor family. Methylated by PrmC. Methylation increases the termination efficiency of RF1.

It is found in the cytoplasm. In terms of biological role, peptide chain release factor 1 directs the termination of translation in response to the peptide chain termination codons UAG and UAA. This is Peptide chain release factor 1 from Citrobacter koseri (strain ATCC BAA-895 / CDC 4225-83 / SGSC4696).